A 436-amino-acid polypeptide reads, in one-letter code: Testican-3 (436 aa).

Residues 1 to 22 (MLKVSAVLCVCAAAWCSQSLAA) form the signal peptide. 8 cysteine pairs are disulfide-bonded: C90–C101, C95–C111, C139–C169, C142–C162, C151–C183, C317–C341, C352–C359, and C361–C380. The region spanning 133–185 (GPILSTCKQCPVVYPSPVCGSDGHTYSFQCKLEYQACVLGKQISVKCEGHCPC) is the Kazal-like domain. A Thyroglobulin type-1 domain is found at 314–380 (DPPCQTELSN…GSRINGVADC (67 aa)). S387 and S392 each carry an O-linked (Xyl...) (glycosaminoglycan) serine glycan. Residues 393 to 436 (GDFHEWTDDEDDEDDIMNDEDEIEDDDEDEGDDDDGGDDHDGYI) form a disordered region. Positions 399–430 (TDDEDDEDDIMNDEDEIEDDDEDEGDDDDGGD) are enriched in acidic residues.

Contains chondroitin sulfate and heparan sulfate O-linked oligosaccharides. In terms of tissue distribution, expressed in brain.

The protein resides in the secreted. It localises to the extracellular space. It is found in the extracellular matrix. Functionally, may participate in diverse steps of neurogenesis. Inhibits the processing of pro-matrix metalloproteinase 2 (MMP-2) by MT1-MMP and MT3-MMP. May interfere with tumor invasion. This is Testican-3 (SPOCK3) from Pongo abelii (Sumatran orangutan).